The chain runs to 793 residues: E3 UFM1-protein ligase 1 (793 aa).

The required for E3 UFM1-protein ligase activity stretch occupies residues 2–212 (AADWEEIRRL…INNLLNLYGF (211 aa)). Disordered stretches follow at residues 405–472 (ALLE…RNKL) and 745–793 (GAEK…SVTE). Gly residues predominate over residues 427–439 (EGGGSVKSGGGGN). Basic and acidic residues predominate over residues 767 to 781 (SLQRELHSLSRDIKD).

It belongs to the UFL1 family. In terms of assembly, catalytic component of the UFM1 ribosome E3 ligase (UREL) complex. Interacts with E2-like enzyme UFC1.

Its subcellular location is the endoplasmic reticulum membrane. The protein resides in the cytoplasm. It is found in the cytosol. The protein localises to the nucleus. It localises to the chromosome. Its function is as follows. E3 protein ligase that mediates ufmylation, the covalent attachment of the ubiquitin-like modifier UFM1 to lysine residues on target proteins, and which plays a key role in various processes, such as ribosome recycling, response to DNA damage, interferon response or reticulophagy (also called ER-phagy). As part of the UREL complex, plays a key role in ribosome recycling by catalyzing mono-ufmylation of RPL26/uL24 subunit of the 60S ribosome. Ufmylation of RPL26/uL24 occurs on free 60S ribosomes following ribosome dissociation: it weakens the junction between post-termination 60S subunits and SEC61 translocons, promoting release and recycling of the large ribosomal subunit from the endoplasmic reticulum membrane. Ufmylation of RPL26/uL24 and subsequent 60S ribosome recycling either take place after normal termination of translation or after ribosome stalling during cotranslational translocation at the endoplasmic reticulum. Involved in reticulophagy in response to endoplasmic reticulum stress by mediating ufmylation of proteins such as CYB5R3 and RPN1, thereby promoting lysosomal degradation of ufmylated proteins. Ufmylation in response to endoplasmic reticulum stress is essential for processes such as hematopoiesis, blood vessel morphogenesis or inflammatory response. The chain is E3 UFM1-protein ligase 1 from Danio rerio (Zebrafish).